The sequence spans 77 residues: U8-lycotoxin-Ls1m (77 aa).

Positions 1–20 (MKLMIFTGLVLFAIVSLIEA) are cleaved as a signal peptide. A propeptide spanning residues 21-26 (QAENEK) is cleaved from the precursor.

It belongs to the neurotoxin 19 (CSTX) family. 08 (U8-Lctx) subfamily. In terms of processing, contains 4 disulfide bonds. In terms of tissue distribution, expressed by the venom gland.

The protein localises to the secreted. The sequence is that of U8-lycotoxin-Ls1m from Lycosa singoriensis (Wolf spider).